The following is a 60-amino-acid chain: Large ribosomal subunit protein bL32 (60 aa).

Positions 1-21 (MAVPRNRHSNARKNIRRSHDA) are disordered.

It belongs to the bacterial ribosomal protein bL32 family.

This chain is Large ribosomal subunit protein bL32, found in Chlamydia felis (strain Fe/C-56) (Chlamydophila felis).